The chain runs to 224 residues: MKKLLLIAATSATILSSSISFAVDMGNDWYLRIDAGAAMFNKEKDKATGVKLKSNTTVPVDLGIGYYISENFRADLTLGTIIGGKLKKSGAATNAPFTGTNISASHKPTITRLLINGYVDLTNFDMFDVFAGAGVGPALVKEKITYNGITGLSSNTKNRTNISYKLTLGTSAQIADGVKAELAYSWIDDGRTKSKNVIYQGTSVSTGGMRYQSHNLTAGIRFDI.

An N-terminal signal peptide occupies residues Met-1–Ala-22.

The chain is Putative adhesin RF_1314 from Rickettsia felis (strain ATCC VR-1525 / URRWXCal2) (Rickettsia azadi).